A 142-amino-acid polypeptide reads, in one-letter code: MNSFALLLVCIQACLVQSVFSQCTSRAAVAADRGIIGGYGLGTPCGLGYGLEAPYGRAGYADYGYPAGAYGIDAYGGIGEGNVAVAGELPVAGTTAVAGQVPIMGAVKFGGDVCAAGSVSIAGKCACGCGEYGYGLGAPYLY.

The signal sequence occupies residues 1–18; it reads MNSFALLLVCIQACLVQS.

This sequence belongs to the chorion protein family.

Its function is as follows. This protein is one of many from the eggshell of the gypsy moth. The chain is Chorion class A protein Ld12 from Lymantria dispar (Gypsy moth).